A 140-amino-acid chain; its full sequence is Desampylase (140 aa).

One can recognise an MPN domain in the interval 13–133; sequence TLIIPQHYLR…WILSEKNKIS (121 aa). Glu34 acts as the Proton donor/acceptor in catalysis. Residues His88, His90, and Asp101 each contribute to the Zn(2+) site. The JAMM motif motif lies at 88–101; that stretch reads HSHIACPPIPSGKD.

This sequence belongs to the peptidase M67B family. As to quaternary structure, exists in two major states: monomer and homodimer. Both conformational states are catalytically active. It depends on Zn(2+) as a cofactor. In terms of processing, the disulfide bridge probably stabilizes the PfJAMM1 homodimer at the optimal growth temperature of the hyperthermophile.

The catalysed reaction is an N(6)-[small archaeal modifier protein]-[protein]-L-lysine + H2O = a [protein]-L-lysine + a [small archaeal modifier protein].. Its activity is regulated as follows. Inhibited by EDTA in vitro. In terms of biological role, metalloprotease that displays desampylase (DSAMP) activity, cleaving ubiquitin-like small archaeal modifier proteins (SAMP1, SAMP2 and SAMP3) from protein conjugates (isopeptide- and linear-linked). Thus, likely regulates sampylation and the pools of 'free' SAMP available for protein modification. In vitro, is also able to cleave non-physiological ubiquitin (Ub) substrates, such as 'Met1-', 'Lys48-', and 'Lys63'-linked Ub dimers (Ub2), and to remove Ub tags from diverse proteins. In Pyrococcus furiosus (strain ATCC 43587 / DSM 3638 / JCM 8422 / Vc1), this protein is Desampylase.